Here is a 309-residue protein sequence, read N- to C-terminus: tRNA dimethylallyltransferase (309 aa).

Residue 13–20 coordinates ATP; it reads GPTGAGKT. 15–20 provides a ligand contact to substrate; sequence TGAGKT. Interaction with substrate tRNA stretches follow at residues 38-41 and 162-166; these read DSRQ and QRVTR.

Belongs to the IPP transferase family. As to quaternary structure, monomer. The cofactor is Mg(2+).

It carries out the reaction adenosine(37) in tRNA + dimethylallyl diphosphate = N(6)-dimethylallyladenosine(37) in tRNA + diphosphate. Functionally, catalyzes the transfer of a dimethylallyl group onto the adenine at position 37 in tRNAs that read codons beginning with uridine, leading to the formation of N6-(dimethylallyl)adenosine (i(6)A). The chain is tRNA dimethylallyltransferase from Nitratidesulfovibrio vulgaris (strain ATCC 29579 / DSM 644 / CCUG 34227 / NCIMB 8303 / VKM B-1760 / Hildenborough) (Desulfovibrio vulgaris).